The following is an 890-amino-acid chain: MLTSPTLKSLWFLFTILGLLGQNLPCVLSSSHRILVDTDVDTDDLFAILYLLKLNKSEFDLVGITLSANAWTNAGHAVNQVYDLLHMMDRDDIPVGVGGEGGISDDGTIHSDVGGYFPIIEQGMTTTGECRYRQAIPKGLGGLLDIDSNYGFRKQFLPQGNRRYTPLQQPTAQKVIVDKISEGPTTVILLGSHTNFALFLMSNPHLKHNIQHIYIMGGGVRSQNPTGCCPANSTVAECQPRQCGNRGNLFTDYTSNPYSEFNIFADPFAAYQVFHSGVPVTLVPLDATNTIPINQKFFETFENNYQRTYEAQYVFLSLKIARDTWFDDEFYKSYFMWDSFTAGVAVSIMRNSANKNNKNGENDFAEMEYMNITVVTSNKPYGRSDGSNPFFDNRRTPKFNLALGGVHSGHVQTGLRDPTCLPKSGIGRGKCKDGYTQEISGSDSVRVLVATRAKPNINIKSKLDREFYVDFLEVLNRPEETGRFNFSSQFPYYKEELFRPDLSKTRPGKPVVFDMDMSAGDFLSLFYLLKVPVDKIDLKAIIVSPTGWANAATIDVVYDLLHMMGRDDIPVGLGDMLALNQSDPIFPPVGGCKYVKAIPRGCGGFLDSDTLYGLARDLPRSPRRYTAENSVTHGAPRDTDRPELRQPLAIEVWQNLTKSGNGVSKITVLTNGPLTNLAKIISSDKKSSSLIKEVYIVGGHINREKSDKGNIFTIPSNAYAEFNMFLDPLAAKTVLESALNITLVPLATQHKLSSFQTMLDRLYSSTKTPEARFVKRLLVRLQALHQKHRRYTHIDMFLGEVLGAVLLGGDDASLKPKMRAEHIKVIAEGDESRDGKILIDKLRGKQIKILERVDLISISESFASRLDDKKQSAVIGSFEEQKKIWSTPPS.

Positions 1–21 (MLTSPTLKSLWFLFTILGLLG) are cleaved as a signal peptide. N55, N232, N371, N485, N580, N655, and N740 each carry an N-linked (GlcNAc...) asparagine glycan.

It belongs to the IUNH family.

Its subcellular location is the secreted. It is found in the extracellular space. It localises to the apoplast. It catalyses the reaction a purine D-ribonucleoside + H2O = a purine nucleobase + D-ribose. It carries out the reaction inosine + H2O = hypoxanthine + D-ribose. The catalysed reaction is adenosine + H2O = D-ribose + adenine. In terms of biological role, extracellular purine-specific hydrolase present in the apoplastic fluid involved in the degradation of extracellular nucleosides, including inosine and adenosine, and which may participate in wound and pathogen responses (e.g. Botrytis cinerea). This is Nucleoside hydrolase 3 from Arabidopsis thaliana (Mouse-ear cress).